The sequence spans 98 residues: Putative protein adenylyltransferase MJ0128 (98 aa).

The short motif at 31 to 45 (GSYARNEQTEKSDID) is the GSX(10)DXD motif element. Residues aspartate 43, aspartate 45, and aspartate 75 each contribute to the Mg(2+) site.

The protein belongs to the MntA antitoxin family. In terms of assembly, probably forms a complex with cognate toxin MJ0127. It depends on Mg(2+) as a cofactor.

It carries out the reaction L-tyrosyl-[protein] + ATP = O-(5'-adenylyl)-L-tyrosyl-[protein] + diphosphate. The enzyme catalyses O-(5'-adenylyl)-L-tyrosyl-[protein] + ATP = O-[5'-(adenylyl-(5'-&gt;3')-adenylyl)]-L-tyrosyl-[protein] + diphosphate. Functionally, probable antitoxin component of a putative type VII toxin-antitoxin (TA) system. Neutralizes cognate toxic MJ0127 by di-AMPylation. The sequence is that of Putative protein adenylyltransferase MJ0128 from Methanocaldococcus jannaschii (strain ATCC 43067 / DSM 2661 / JAL-1 / JCM 10045 / NBRC 100440) (Methanococcus jannaschii).